The sequence spans 232 residues: U2 small nuclear ribonucleoprotein B'' (232 aa).

Residues Q10 to A89 enclose the RRM 1 domain. Positions T100 to N157 are disordered. Basic and acidic residues predominate over residues R108 to Q122. Polar residues-rich tracts occupy residues R123 to N139 and F146 to P156. Residues N158–K232 enclose the RRM 2 domain.

Belongs to the RRM U1 A/B'' family. Component of the spliceosome where it is associated with snRNP U2.

It localises to the nucleus. It is found in the cajal body. Its subcellular location is the nucleoplasm. The protein resides in the cytoplasm. Functionally, involved in nuclear pre-mRNA splicing. The protein is U2 small nuclear ribonucleoprotein B'' (U2B'') of Arabidopsis thaliana (Mouse-ear cress).